Reading from the N-terminus, the 980-residue chain is Phosphoenolpyruvate carboxylase (980 aa).

Catalysis depends on residues His-182 and Lys-625.

This sequence belongs to the PEPCase type 1 family. The cofactor is Mg(2+).

It catalyses the reaction oxaloacetate + phosphate = phosphoenolpyruvate + hydrogencarbonate. Functionally, forms oxaloacetate, a four-carbon dicarboxylic acid source for the tricarboxylic acid cycle. In Bordetella pertussis (strain Tohama I / ATCC BAA-589 / NCTC 13251), this protein is Phosphoenolpyruvate carboxylase.